Reading from the N-terminus, the 247-residue chain is Probable transcriptional regulatory protein lpl1249 (247 aa).

It belongs to the TACO1 family.

It is found in the cytoplasm. This chain is Probable transcriptional regulatory protein lpl1249, found in Legionella pneumophila (strain Lens).